Consider the following 359-residue polypeptide: WW domain-binding protein wbp-11 (359 aa).

3 disordered regions span residues 1–38 (MPSI…DRQQ), 235–264 (PSSY…NPMG), and 317–341 (PGDN…QKQA). Residues 8 to 27 (KSGERYRAPTDQARKMDRKK) are compositionally biased toward basic and acidic residues. The segment covering 245–256 (MPHHHHHHHPHA) has biased composition (basic residues).

Its function is as follows. Activates pre-mRNA splicing. May inhibit PP1 phosphatase activity. The sequence is that of WW domain-binding protein wbp-11 from Caenorhabditis elegans.